We begin with the raw amino-acid sequence, 289 residues long: S-methyl-5'-thioadenosine phosphorylase (289 aa).

Phosphate-binding positions include S24, 66–67, and 99–100; these read RH and TA. M202 is a binding site for substrate. T203 is a phosphate binding site. 226-228 lines the substrate pocket; that stretch reads DYD.

The protein belongs to the PNP/MTAP phosphorylase family. MTAP subfamily. In terms of assembly, homotrimer. In terms of tissue distribution, in embryos, expressed in the fat body and visceral mesoderm.

It is found in the cytoplasm. It localises to the nucleus. It catalyses the reaction S-methyl-5'-thioadenosine + phosphate = 5-(methylsulfanyl)-alpha-D-ribose 1-phosphate + adenine. It participates in amino-acid biosynthesis; L-methionine biosynthesis via salvage pathway; S-methyl-5-thio-alpha-D-ribose 1-phosphate from S-methyl-5'-thioadenosine (phosphorylase route): step 1/1. Catalyzes the reversible phosphorylation of S-methyl-5'-thioadenosine (MTA) to adenine and 5-methylthioribose-1-phosphate. Involved in the breakdown of MTA, a major by-product of polyamine biosynthesis. Responsible for the first step in the methionine salvage pathway after MTA has been generated from S-adenosylmethionine. Has broad substrate specificity with 6-aminopurine nucleosides as preferred substrates. The protein is S-methyl-5'-thioadenosine phosphorylase (Mtap) of Drosophila melanogaster (Fruit fly).